The primary structure comprises 254 residues: (2Z,6E)-farnesyl diphosphate synthase (254 aa).

Aspartate 34 is an active-site residue. Aspartate 34 is a Mg(2+) binding site. Residues glycine 35–arginine 38, tryptophan 39, histidine 52, and serine 80–aspartate 82 contribute to the substrate site. Catalysis depends on asparagine 83, which acts as the Proton acceptor. Residues arginine 86, arginine 203, and arginine 209–serine 211 each bind substrate. Residue glutamate 222 participates in Mg(2+) binding.

This sequence belongs to the UPP synthase family. Z-FPP synthase subfamily. As to quaternary structure, homodimer. It depends on Mg(2+) as a cofactor.

It carries out the reaction isopentenyl diphosphate + (2E)-geranyl diphosphate = (2Z,6E)-farnesyl diphosphate + diphosphate. Catalyzes the condensation of only one isopentenyl pyrophosphate (IPP) unit in the cis configuration to E-geranyl diphosphate (E-GPP) generating the 15 carbon product (2Z,6E)-farnesyl diphosphate (Z-FPP or EZ-FPP). Only geranyl diphosphate (GPP) can be used as isoprenyl acceptor. In Thermobifida fusca (strain YX), this protein is (2Z,6E)-farnesyl diphosphate synthase.